A 66-amino-acid polypeptide reads, in one-letter code: Conotoxin Bu1.4 (66 aa).

The signal sequence occupies residues 1–23 (MGMRMRMMFTVFLLVVLANTVVS). The propeptide occupies 24–46 (FPSDRDSDGADAEASDEPVEFER). The segment at 25–48 (PSDRDSDGADAEASDEPVEFERDE) is disordered. Over residues 32–42 (GADAEASDEPV) the composition is skewed to acidic residues. Disulfide bonds link cysteine 51/cysteine 57 and cysteine 52/cysteine 62. Threonine amide is present on threonine 63.

The protein belongs to the conotoxin A superfamily. Expressed by the venom duct.

It localises to the secreted. In Conus bullatus (Bubble cone), this protein is Conotoxin Bu1.4.